Here is a 561-residue protein sequence, read N- to C-terminus: Laccase-1 (561 aa).

Positions 1-20 are cleaved as a signal peptide; that stretch reads MKNSFFSSLAKFASLSLAFA. 2 Plastocyanin-like domains span residues 68–185 and 191–337; these read VVQN…GPAT and DLGM…YTGS. N-linked (GlcNAc...) asparagine glycosylation is found at N71, N87, and N114. Cu cation-binding residues include H119, H121, H163, and H165. A disulfide bridge links C140 with C542. N-linked (GlcNAc...) asparagine glycans are attached at residues N226, N284, N327, N391, and N398. The region spanning 396 to 525 is the Plastocyanin-like 3 domain; it reads LLNWTDPTLL…ALQFVESESS (130 aa). Cu cation is bound by residues H445, H448, H450, H504, C505, H506, and H510.

This sequence belongs to the multicopper oxidase family. Requires Cu cation as cofactor.

Its subcellular location is the secreted. It carries out the reaction 4 hydroquinone + O2 = 4 benzosemiquinone + 2 H2O. Lignin degradation and detoxification of lignin-derived products. The sequence is that of Laccase-1 (lcc1) from Botryotinia fuckeliana (Noble rot fungus).